The chain runs to 700 residues: Elongation factor G (700 aa).

Positions 13–288 constitute a tr-type G domain; sequence SKIRNIGITA…AVIDYLPAPD (276 aa). GTP contacts are provided by residues 22-29, 86-90, and 140-143; these read AHIDAGKT, DTPGH, and NKLD.

It belongs to the TRAFAC class translation factor GTPase superfamily. Classic translation factor GTPase family. EF-G/EF-2 subfamily.

It is found in the cytoplasm. Catalyzes the GTP-dependent ribosomal translocation step during translation elongation. During this step, the ribosome changes from the pre-translocational (PRE) to the post-translocational (POST) state as the newly formed A-site-bound peptidyl-tRNA and P-site-bound deacylated tRNA move to the P and E sites, respectively. Catalyzes the coordinated movement of the two tRNA molecules, the mRNA and conformational changes in the ribosome. In Gluconobacter oxydans (strain 621H) (Gluconobacter suboxydans), this protein is Elongation factor G.